We begin with the raw amino-acid sequence, 358 residues long: Chorismate synthase (358 aa).

Residues Arg-46 and Arg-52 each contribute to the NADP(+) site. FMN-binding positions include 123 to 125 (RSS), 239 to 240 (NA), Gly-283, 298 to 302 (KSVAT), and Arg-324.

This sequence belongs to the chorismate synthase family. Homotetramer. Requires FMNH2 as cofactor.

It catalyses the reaction 5-O-(1-carboxyvinyl)-3-phosphoshikimate = chorismate + phosphate. It functions in the pathway metabolic intermediate biosynthesis; chorismate biosynthesis; chorismate from D-erythrose 4-phosphate and phosphoenolpyruvate: step 7/7. Catalyzes the anti-1,4-elimination of the C-3 phosphate and the C-6 proR hydrogen from 5-enolpyruvylshikimate-3-phosphate (EPSP) to yield chorismate, which is the branch point compound that serves as the starting substrate for the three terminal pathways of aromatic amino acid biosynthesis. This reaction introduces a second double bond into the aromatic ring system. In Parabacteroides distasonis (strain ATCC 8503 / DSM 20701 / CIP 104284 / JCM 5825 / NCTC 11152), this protein is Chorismate synthase.